Here is a 723-residue protein sequence, read N- to C-terminus: Malonamoyl-CoA synthetase vrtB (723 aa).

It belongs to the ATP-dependent AMP-binding enzyme family.

Its pathway is secondary metabolite biosynthesis; terpenoid biosynthesis. Its function is as follows. Malonamoyl-CoA synthetase; part of the gene cluster that mediates the biosynthesis of viridicatumtoxin, a tetracycline-like fungal meroterpenoid with a unique, fused spirobicyclic ring system. The first step of the pathway is the production of the malonamoyl-CoA starter unit for the polyketide synthase vrtA. The aldolase vrtJ may be involved in the synthesis of the malonamate substrate for malonamoyl-CoA synthetase vrtB. The polyketide synthase vrtA then may utilize the malonamoyl-CoA starter unit, followed by sequential condensation of eight malonyl-CoA units to form the polyketide backbone. The cyclization of the last ring could be mediated by the lactamase-like protein vrtG. The proposed post-PKS tailoring steps are a hydroxylation at C5 catalyzed the cytochrome P450 monooxygenase vrtE, a hydroxylation at C12a catalyzed by VrtH and/or VrtI, and an O-methylation by the O-methyltransferase vrtF. VrtC is then proposed to catalyze the transfer of a geranyl group synthesized by vrtD to the aromatic C ring of the tetracyclic polyketide intermediate of viridicatumtoxin to yield previridicatumtoxin. Finally, the cytochrome P450 monooxygenase vrtK catalyzes the spirocyclization of the geranyl moiety of previridicatumtoxin to afford viridicatumtoxin. The chain is Malonamoyl-CoA synthetase vrtB from Penicillium aethiopicum.